Consider the following 225-residue polypeptide: U2 small nuclear ribonucleoprotein B'' (225 aa).

One can recognise an RRM 1 domain in the interval 7–86 (HTIYINNMND…KPMRIQYAKT (80 aa)). The tract at residues 99-145 (ADKEKKKEKKKAKTVEQTATTTNKKPGQGTPNSANTQGNSTPNPQVP) is disordered. Lysine 111 carries the post-translational modification N6-acetyllysine; alternate. A Glycyl lysine isopeptide (Lys-Gly) (interchain with G-Cter in SUMO2); alternate cross-link involves residue lysine 111. A compositionally biased stretch (low complexity) spans 113–123 (VEQTATTTNKK). Residues 127 to 141 (GTPNSANTQGNSTPN) show a composition bias toward polar residues. Residue tyrosine 151 is modified to Phosphotyrosine. Residues 151-225 (YILFLNNLPE…HAMKITYAKK (75 aa)) form the RRM 2 domain.

This sequence belongs to the RRM U1 A/B'' family. As to quaternary structure, identified in the spliceosome B complex. Identified in the spliceosome C complex. Present in a spliceosome complex assembled in vitro, and composed of SNRPB2, HPRP8BP and CRNKL1. Contributes to the binding of stem loop IV of U2 snRNA with SNRPP1.

The protein resides in the nucleus. In terms of biological role, involved in pre-mRNA splicing as component of the spliceosome. Associated with sn-RNP U2, where it contributes to the binding of stem loop IV of U2 snRNA. This chain is U2 small nuclear ribonucleoprotein B'' (SNRPB2), found in Homo sapiens (Human).